A 122-amino-acid chain; its full sequence is Large ribosomal subunit protein uL14 (122 aa).

The protein belongs to the universal ribosomal protein uL14 family. As to quaternary structure, part of the 50S ribosomal subunit. Forms a cluster with proteins L3 and L19. In the 70S ribosome, L14 and L19 interact and together make contacts with the 16S rRNA in bridges B5 and B8.

Binds to 23S rRNA. Forms part of two intersubunit bridges in the 70S ribosome. This chain is Large ribosomal subunit protein uL14, found in Orientia tsutsugamushi (strain Ikeda) (Rickettsia tsutsugamushi).